The chain runs to 491 residues: Acetyl-coenzyme A carboxylase carboxyl transferase subunit beta, chloroplastic (491 aa).

Residues 26–49 (ARPRPIGNTNGSQDPSINDRDKNG) form a disordered region. The segment covering 32–41 (GNTNGSQDPS) has biased composition (polar residues). The CoA carboxyltransferase N-terminal domain maps to 222 to 491 (LWVQCDNCYG…PLNHNSQVKR (270 aa)). Positions 226, 229, 245, and 248 each coordinate Zn(2+). A C4-type zinc finger spans residues 226–248 (CDNCYGLNYKKIFSSKMNICEQC).

The protein belongs to the AccD/PCCB family. As to quaternary structure, acetyl-CoA carboxylase is a heterohexamer composed of biotin carboxyl carrier protein, biotin carboxylase and 2 subunits each of ACCase subunit alpha and ACCase plastid-coded subunit beta (accD). It depends on Zn(2+) as a cofactor.

It localises to the plastid. The protein localises to the chloroplast stroma. The catalysed reaction is N(6)-carboxybiotinyl-L-lysyl-[protein] + acetyl-CoA = N(6)-biotinyl-L-lysyl-[protein] + malonyl-CoA. Its pathway is lipid metabolism; malonyl-CoA biosynthesis; malonyl-CoA from acetyl-CoA: step 1/1. Its function is as follows. Component of the acetyl coenzyme A carboxylase (ACC) complex. Biotin carboxylase (BC) catalyzes the carboxylation of biotin on its carrier protein (BCCP) and then the CO(2) group is transferred by the transcarboxylase to acetyl-CoA to form malonyl-CoA. This Ceratophyllum demersum (Rigid hornwort) protein is Acetyl-coenzyme A carboxylase carboxyl transferase subunit beta, chloroplastic.